Reading from the N-terminus, the 729-residue chain is Cullin-6 (729 aa).

In terms of domain architecture, Cullin neddylation spans 659–720; it reads DRKYEIKACI…EQLYIRRSEN (62 aa). K673 is covalently cross-linked (Glycyl lysine isopeptide (Lys-Gly) (interchain with G-Cter in NEDD8)).

Belongs to the cullin family. As to quaternary structure, probably interacts with skr-3. Post-translationally, neddylated; which enhances the ubiquitination activity of SCF-like complex.

Its function is as follows. Probable core component of cullin-based SCF-like E3 ubiquitin-protein ligase complexes which mediate the ubiquitination and subsequent proteasomal degradation of target proteins. The polypeptide is Cullin-6 (cul-6) (Caenorhabditis elegans).